Here is a 290-residue protein sequence, read N- to C-terminus: Picrinine-N-methytransferase (290 aa).

The segment at 71 to 80 (MLDVGCGIGG) is SAM motif I. The Vacuolar targeting signal signature appears at 133 to 139 (DGTFDLV). Residues 134–142 (GTFDLVFTI) form an SAM motif II region. The SAM motif III stretch occupies residues 161–170 (VAAPGAPIVI).

The protein belongs to the class I-like SAM-binding methyltransferase superfamily. gTMT family. As to quaternary structure, homodimer. As to expression, accumulates in tissues actively synthesizing monoterpenoid indole alkaloids (MIAs) (at protein level). Mainly expressed in young leaves and, to a lower extent, in roots and stems.

It is found in the vacuole membrane. It carries out the reaction picrinine + S-adenosyl-L-methionine = ervincine + S-adenosyl-L-homocysteine + H(+). Its pathway is alkaloid biosynthesis; vindoline biosynthesis. In terms of biological role, S-adenosyl-L-methionine-dependent N-methyltransferase involved in the biosynthesis of biologically active monoterpenoid indole alkaloids (MIAs) natural products including vindoline. Catalyzes the conversion of picrinine to N-methylpicrinine (ervincine). Also accepts, with low efficiency, 21-hydroxycyclolochnericine and norajmaline as substrates. The sequence is that of Picrinine-N-methytransferase from Rauvolfia serpentina (Serpentine wood).